The following is a 139-amino-acid chain: Small ribosomal subunit protein bS6 (139 aa).

A disordered region spans residues 97–139; the sequence is TEASPMAKAKDERDSRRSSEGERRSAPAEATEEVKETAEKAAE. Residues 104–139 show a composition bias toward basic and acidic residues; the sequence is KAKDERDSRRSSEGERRSAPAEATEEVKETAEKAAE.

It belongs to the bacterial ribosomal protein bS6 family.

In terms of biological role, binds together with bS18 to 16S ribosomal RNA. The protein is Small ribosomal subunit protein bS6 of Shewanella sediminis (strain HAW-EB3).